A 144-amino-acid polypeptide reads, in one-letter code: Urease subunit beta (144 aa).

This sequence belongs to the urease beta subunit family. In terms of assembly, heterotrimer of UreA (gamma), UreB (beta) and UreC (alpha) subunits. Three heterotrimers associate to form the active enzyme.

The protein localises to the cytoplasm. The catalysed reaction is urea + 2 H2O + H(+) = hydrogencarbonate + 2 NH4(+). The protein operates within nitrogen metabolism; urea degradation; CO(2) and NH(3) from urea (urease route): step 1/1. The chain is Urease subunit beta from Yersinia pseudotuberculosis serotype O:1b (strain IP 31758).